Consider the following 207-residue polypeptide: Small ribosomal subunit protein uS4 (207 aa).

Positions 30-53 are disordered; the sequence is DKSKFDTKPGQHGRTSGQRTSDFG. Polar residues predominate over residues 42–52; that stretch reads GRTSGQRTSDF. The 61-residue stretch at 97 to 157 folds into the S4 RNA-binding domain; sequence SRLDNVVYRM…EKSKKQARIV (61 aa).

The protein belongs to the universal ribosomal protein uS4 family. As to quaternary structure, part of the 30S ribosomal subunit. Contacts protein S5. The interaction surface between S4 and S5 is involved in control of translational fidelity.

Its function is as follows. One of the primary rRNA binding proteins, it binds directly to 16S rRNA where it nucleates assembly of the body of the 30S subunit. With S5 and S12 plays an important role in translational accuracy. This is Small ribosomal subunit protein uS4 from Delftia acidovorans (strain DSM 14801 / SPH-1).